A 606-amino-acid chain; its full sequence is Leucine-rich repeat and immunoglobulin-like domain-containing nogo receptor-interacting protein 1 (606 aa).

An N-terminal signal peptide occupies residues 1 to 27; it reads MILQLPSCLCPILLIVVGSILSGSASG. 2 disulfides stabilise this stretch: C28–C34 and C32–C43. The LRRNT domain maps to 28–57; the sequence is CPQRCDCSPQDRSVLCHRKRYLDVPEGIPT. The Extracellular segment spans residues 28–547; it reads CPQRCDCSPQ…FDIKTLIIAT (520 aa). LRR repeat units lie at residues 58-79, 82-103, 106-127, 130-151, 154-175, 178-199, 202-223, 250-271, 274-295, 298-319, and 322-343; these read DTRLLDLSKNRIKALNQDEFSA, YLEELELNENIVSIIEPGAFNG, NLRSLGLRSNRLKLIPLGVFTG, NLTQLDISENKIVILLDDMFQD, NLKSLEVGDNDLVYISHRAFRG, SLEELTLEKCNLTSVPTEALSH, GLITLKLRYLNINVIRDYSFKR, NLTSLSITHSNLSSIPYVAIRH, YLRFLNLSYNPITAVEGSMLYE, RLQEFHLVGGQLSVVEPYAFRG, and HLKVLNVSSNYLSTLEESSFHS. A glycan (N-linked (GlcNAc...) asparagine) is linked at N130. The N-linked (GlcNAc...) asparagine glycan is linked to N188. Residues N250, N260, and N279 are each glycosylated (N-linked (GlcNAc...) asparagine). Residues N327, N374, N478, N491, N512, N523, and N528 are each glycosylated (N-linked (GlcNAc...) asparagine). An LRRCT domain is found at 355 to 409; it reads NPLACDCRLLWIFRRRWRLNFSRQQPSCSSPEYVQGKEFKDFPDVLQPNYFTCRR. 3 disulfide bridges follow: C359-C382, C361-C407, and C432-C483. An Ig-like C2-type domain is found at 397-496; that stretch reads PDVLQPNYFT…NAGGNDTSLA (100 aa). A helical membrane pass occupies residues 548–568; it reads TMGFISFLGVVLFCLVLLFLW. The Cytoplasmic segment spans residues 569–606; sequence SRGKGNTKHNIEIEYVPRKSDAGLSSADAPRKFNMKMI.

Its subcellular location is the cell membrane. Functionally, may play a role in regulating axonal regeneration and plasticity in the adult central nervous system. This chain is Leucine-rich repeat and immunoglobulin-like domain-containing nogo receptor-interacting protein 1 (lingo1), found in Xenopus tropicalis (Western clawed frog).